We begin with the raw amino-acid sequence, 145 residues long: Sperm mitochondrial-associated cysteine-rich protein (145 aa).

Ser38, Ser45, Ser113, and Ser131 each carry phosphoserine. The segment at 105–145 is disordered; sequence CSSENKTESDSDGSGQTQDRGAQTQQSPQGGQGNWNQKKTK. The segment covering 116–145 has biased composition (polar residues); sequence DGSGQTQDRGAQTQQSPQGGQGNWNQKKTK.

Testis. Selectively expressed in the spermatids of seminiferous tubules and in flagella of epididymal sperm.

It localises to the cytoplasm. The protein resides in the mitochondrion membrane. In terms of biological role, involved in sperm motility. Its absence is associated with genetic background dependent male infertility. Infertility may be due to reduced sperm motility in the female reproductive tract and inability to penetrate the oocyte zona pellucida. The polypeptide is Sperm mitochondrial-associated cysteine-rich protein (Smcp) (Rattus norvegicus (Rat)).